Consider the following 327-residue polypeptide: rRNA 2'-O-methyltransferase fibrillarin (327 aa).

Residues 1 to 96 (MGTDYRNSGR…GFKGGAKTMV (96 aa)) form a disordered region. An asymmetric dimethylarginine mark is found at Arg10, Arg19, Arg44, Arg49, Arg55, Arg65, Arg69, and Arg78. The span at 22 to 56 (GNDRRDSGRSFGDRRPERPDFKRGDGGRGFGDRRG) shows a compositional bias: basic and acidic residues. Residues 73–90 (DGPGGRGGPGGPGGGFKG) are compositionally biased toward gly residues. S-adenosyl-L-methionine is bound by residues 181-182 (TT), 200-201 (EF), 225-226 (DA), and 245-248 (DVAQ).

It belongs to the methyltransferase superfamily. Fibrillarin family. In terms of assembly, component of box C/D small nucleolar ribonucleoprotein (snoRNP) particles. It is associated with the U3, U8 and U13 small nuclear RNAs. In terms of processing, by homology to other fibrillarins, some or all of the N-terminal domain arginines are modified to asymmetric dimethylarginine (DMA).

Its subcellular location is the nucleus. It is found in the nucleolus. It catalyses the reaction L-glutaminyl-[histone H2A] + S-adenosyl-L-methionine = N(5)-methyl-L-glutaminyl-[histone H2A] + S-adenosyl-L-homocysteine + H(+). Its function is as follows. S-adenosyl-L-methionine-dependent methyltransferase that has the ability to methylate both RNAs and proteins. Involved in pre-rRNA processing. Utilizes the methyl donor S-adenosyl-L-methionine to catalyze the site-specific 2'-hydroxyl methylation of ribose moieties in pre-ribosomal RNA. Site specificity is provided by a guide RNA that base pairs with the substrate. Methylation occurs at a characteristic distance from the sequence involved in base pairing with the guide RNA. Also acts as a protein methyltransferase by mediating methylation of 'Gln-105' of histone H2A (H2AQ105me), a modification that impairs binding of the FACT complex and is specifically present at 35S ribosomal DNA locus. This Giardia intestinalis (Giardia lamblia) protein is rRNA 2'-O-methyltransferase fibrillarin.